A 70-amino-acid chain; its full sequence is Large ribosomal subunit protein bL31 (70 aa).

4 residues coordinate Zn(2+): cysteine 16, cysteine 18, cysteine 37, and cysteine 40.

This sequence belongs to the bacterial ribosomal protein bL31 family. Type A subfamily. In terms of assembly, part of the 50S ribosomal subunit. Zn(2+) is required as a cofactor.

Its function is as follows. Binds the 23S rRNA. The protein is Large ribosomal subunit protein bL31 of Shewanella baltica (strain OS223).